An 89-amino-acid chain; its full sequence is Co-chaperonin GroES (89 aa).

It belongs to the GroES chaperonin family. In terms of assembly, heptamer of 7 subunits arranged in a ring. Interacts with the chaperonin GroEL.

The protein resides in the cytoplasm. Functionally, together with the chaperonin GroEL, plays an essential role in assisting protein folding. The GroEL-GroES system forms a nano-cage that allows encapsulation of the non-native substrate proteins and provides a physical environment optimized to promote and accelerate protein folding. GroES binds to the apical surface of the GroEL ring, thereby capping the opening of the GroEL channel. This chain is Co-chaperonin GroES, found in Petrotoga mobilis (strain DSM 10674 / SJ95).